The sequence spans 194 residues: uncharacterized protein (194 aa).

Disordered regions lie at residues 1–21 and 73–97; these read MPKGRRGSQNPKMSQRPAPPL and PATVPPPPPGLGPPSERPCPPPWPS. Residues 73 to 96 are compositionally biased toward pro residues; the sequence is PATVPPPPPGLGPPSERPCPPPWP.

This is an uncharacterized protein from Mus musculus (Mouse).